Here is a 2104-residue protein sequence, read N- to C-terminus: Replication polyprotein (2104 aa).

The next 2 helical transmembrane spans lie at 23–43 and 70–90; these read LVASPWILLVIAIPLCAFASS and FNPFGIIIKYFLYFAILYAFI. A coiled-coil region spans residues 289-313; sequence VRVGEIREKVATLRNKLNTLQTKEL. An SF3 helicase domain is found at 329–501; the sequence is LEVLLIEVKV…NKMPKRGAID (173 aa). The tract at residues 1499–1520 is viral peptidase; that stretch reads GDCGSPIVLASGKKAGKLIGFH. In terms of domain architecture, RdRp catalytic spans 1838–1965; the sequence is PNYFDADYKN…SVSDEYKDKY (128 aa).

Specific enzymatic cleavages in vivo yield mature proteins.

It is found in the membrane. The enzyme catalyses RNA(n) + a ribonucleoside 5'-triphosphate = RNA(n+1) + diphosphate. Its function is as follows. The peptidase activity is involved in polyprotein maturation, possibly along with hosts proteases. Transmembrane protein may be surface viral glycoprotein. RNA-directed RNA polymerase replicates the viral genome. The polypeptide is Replication polyprotein (Drosophila melanogaster (Fruit fly)).